The sequence spans 126 residues: 14 kDa phosphohistidine phosphatase (126 aa).

Position 22 (Lys-22) interacts with substrate. His-54 functions as the Proton acceptor in the catalytic mechanism. Substrate is bound at residue 95-97; that stretch reads SMG.

It belongs to the janus family. Monomer.

It is found in the cytoplasm. The enzyme catalyses N(pros)-phospho-L-histidyl-[protein] + H2O = L-histidyl-[protein] + phosphate. It carries out the reaction N(tele)-phospho-L-histidyl-[protein] + H2O = L-histidyl-[protein] + phosphate. Exhibits phosphohistidine phosphatase activity. This is 14 kDa phosphohistidine phosphatase (PHPT1) from Sus scrofa (Pig).